A 290-amino-acid chain; its full sequence is 3-deoxy-manno-octulosonate cytidylyltransferase, mitochondrial (290 aa).

A mitochondrion-targeting transit peptide spans 1–50 (MSVCSSSSSSQKTWIVNGILAGTAIAAAIGARAYLGRSKKFRSRVVGIIP).

The protein belongs to the KdsB family. Requires Mg(2+) as cofactor. In terms of tissue distribution, expressed in roots, leaves, stems and siliques.

It localises to the mitochondrion outer membrane. The enzyme catalyses 3-deoxy-alpha-D-manno-oct-2-ulosonate + CTP = CMP-3-deoxy-beta-D-manno-octulosonate + diphosphate. The protein operates within nucleotide-sugar biosynthesis; CMP-3-deoxy-D-manno-octulosonate biosynthesis; CMP-3-deoxy-D-manno-octulosonate from 3-deoxy-D-manno-octulosonate and CTP: step 1/1. Inhibited by 2beta-deoxy-Kdo. In terms of biological role, catalyzes the production of the sugar nucleotide CMP-3-deoxy-D-manno-octulosonate (CMP-KDO). CTP is the preferred nucleotide donor, but it can partially be replaced with UTP. Activates KDO during the biosynthesis of rhamnogalacturonan II (RG-II), a structurally complex pectic polysaccharide of the primary cell wall. RG-II is essential for the cell wall integrity of rapidly growing tissues and pollen tube growth and elongation. The polypeptide is 3-deoxy-manno-octulosonate cytidylyltransferase, mitochondrial (Arabidopsis thaliana (Mouse-ear cress)).